The following is a 515-amino-acid chain: Nectin-1 (515 aa).

An N-terminal signal peptide occupies residues 1 to 30; that stretch reads MARMGLAGAAGRWWGLALGLTAFFLPGTHT. Positions 31-141 constitute an Ig-like V-type domain; sequence QVVQVNDSMY…GNRESQLNLT (111 aa). Over 31–354 the chain is Extracellular; it reads QVVQVNDSMY…GRRAGQMPTA (324 aa). 7 N-linked (GlcNAc...) asparagine glycosylation sites follow: asparagine 36, asparagine 72, asparagine 139, asparagine 202, asparagine 286, asparagine 297, and asparagine 332. A disulfide bridge connects residues cysteine 51 and cysteine 124. 2 consecutive Ig-like C2-type domains span residues 145 to 243 and 247 to 334; these read KPTN…TLNV and PEVT…VNIT. Intrachain disulfides connect cysteine 172–cysteine 226 and cysteine 269–cysteine 316. The interval 282–299 is interaction with FGFR; that stretch reads WTTLNGSLPKGVEAQNRT. The helical transmembrane segment at 355 to 375 threads the bilayer; it reads IIGGVAGSVLLVLIVVGGIIV. Over 376–515 the chain is Cytoplasmic; sequence ALRRRRHTFK…SFISKKEWYV (140 aa). The disordered stretch occupies residues 399 to 486; it reads YSKAGIPQHH…DGYGDRTLGY (88 aa). Residues serine 421, serine 433, and serine 434 each carry the phosphoserine modification. Position 435 is a phosphotyrosine (tyrosine 435). Residues 447-464 show a composition bias toward basic and acidic residues; sequence GERKVGGPHPKYDEDAKR. Serine 509 carries the post-translational modification Phosphoserine.

It belongs to the nectin family. In terms of assembly, cis- and trans-homodimer. Can form trans-heterodimers with NECTIN3 and with NECTIN4. Interaction between NECTIN1 and NECTIN3 on the pre- and postsynaptic sites, respectively, initiates the formation of puncta adherentia junctions between axons and dendrites. Interacts (via cytoplasmic domain) with AFDN (via PDZ domain); this interaction recruits NECTIN1 to cadherin-based adherens junctions and provides a connection with the actin cytoskeleton. Interacts with integrin alphaV/beta3. Interacts (via Ig-like C2-type domain 2) with FGFR1, FGFR2 and FGFR3. (Microbial infection) Interacts with herpes pseudorabies virus/PRV envelope glycoprotein D.

The protein localises to the cell membrane. It localises to the cell junction. It is found in the adherens junction. Its subcellular location is the presynaptic cell membrane. Its function is as follows. Cell adhesion molecule that promotes cell-cell contacts and plays important roles in the development of the nervous system. Acts by forming homophilic or heterophilic trans-dimers. Heterophilic interactions have been detected between NECTIN1 and NECTIN3 and between NECTIN1 and NECTIN4. Involved in axon guidance by promoting contacts between the commissural axons and the floor plate cells. Involved in synaptogegesis. Has some neurite outgrowth-promoting activity. Promotes formation of checkerboard-like cellular pattern of hair cells and supporting cells in the auditory epithelium via heterophilic interaction with NECTIN3: NECTIN1 is present in the membrane of hair cells and associates with NECTIN3 on supporting cells, thereby mediating heterotypic adhesion between these two cell types. Required for enamel mineralization. (Microbial infection) Acts as a receptor for pseudorabies virus/PRV. This Mus musculus (Mouse) protein is Nectin-1.